The following is a 95-amino-acid chain: UPF0223 protein Bsph_1378 (95 aa).

This sequence belongs to the UPF0223 family.

The polypeptide is UPF0223 protein Bsph_1378 (Lysinibacillus sphaericus (strain C3-41)).